Reading from the N-terminus, the 23-residue chain is Ocellatin-LB2 (23 aa).

An Asparagine amide modification is found at Asn-23.

In terms of tissue distribution, expressed by the skin glands.

It is found in the secreted. Functionally, antibacterial peptide that inhibits the Gram-negative bacterium A.actinomycetemcomitans ATCC 29522 (MIC=210 uM). No activity against the bacteria E.coli ATCC 25922 and S.aureus ATCC 25923, or the fungi C.albicans ATCC 18804 and C.lusitaniae ATCC 56936. Does not show hemolytic activity towards rabbit erythrocytes. The chain is Ocellatin-LB2 from Leptodactylus labyrinthicus (Labyrinth frog).